The primary structure comprises 473 residues: Photosystem II CP43 reaction center protein (473 aa).

A propeptide spanning residues 1–14 is cleaved from the precursor; that stretch reads MKTLYSLRRFYHVE. T15 bears the N-acetylthreonine mark. Phosphothreonine is present on T15. The next 5 helical transmembrane spans lie at 69 to 93, 134 to 155, 178 to 200, 255 to 275, and 291 to 312; these read LFEVAHFVPEKPMYEQGLILLPHLA, LLGPETLEESFPFFGYVWKDRN, KALYFGGVYDTWAPGGGDVRKIT, KPFAWARRALVWSGEAYLSYS, and WFNNTAYPSEFYGPTGPEASQA. Position 367 (E367) interacts with [CaMn4O5] cluster. A helical membrane pass occupies residues 447–471; sequence RARAAAAGFEKGIDRDLEPVLFMTP.

The protein belongs to the PsbB/PsbC family. PsbC subfamily. As to quaternary structure, PSII is composed of 1 copy each of membrane proteins PsbA, PsbB, PsbC, PsbD, PsbE, PsbF, PsbH, PsbI, PsbJ, PsbK, PsbL, PsbM, PsbT, PsbX, PsbY, PsbZ, Psb30/Ycf12, at least 3 peripheral proteins of the oxygen-evolving complex and a large number of cofactors. It forms dimeric complexes. The cofactor is Binds multiple chlorophylls and provides some of the ligands for the Ca-4Mn-5O cluster of the oxygen-evolving complex. It may also provide a ligand for a Cl- that is required for oxygen evolution. PSII binds additional chlorophylls, carotenoids and specific lipids..

The protein resides in the plastid. Its subcellular location is the chloroplast thylakoid membrane. In terms of biological role, one of the components of the core complex of photosystem II (PSII). It binds chlorophyll and helps catalyze the primary light-induced photochemical processes of PSII. PSII is a light-driven water:plastoquinone oxidoreductase, using light energy to abstract electrons from H(2)O, generating O(2) and a proton gradient subsequently used for ATP formation. The polypeptide is Photosystem II CP43 reaction center protein (Carica papaya (Papaya)).